Here is a 296-residue protein sequence, read N- to C-terminus: Origin of replication complex subunit 6 (296 aa).

Residues 212–296 (PSKRKHDDDS…MALEVSSAAN (85 aa)) are disordered. Positions 220–236 (DSDSSGESSGDDQDELD) are enriched in acidic residues. The span at 254–264 (WKSSVLSSNKQ) shows a compositional bias: polar residues.

This sequence belongs to the ORC6 family. In terms of assembly, component of the origin recognition complex (ORC) composed of at least ORC1, ORC2, ORC3, ORC4, ORC5 and ORC6. ORC is regulated in a cell-cycle and development dependent manner. It is sequentially assembled at the exit from anaphase of mitosis and disassembled as cells enter S phase.

The protein resides in the nucleus. Its function is as follows. Component of the origin recognition complex (ORC) that binds origins of replication. DNA-binding is ATP-dependent. The specific DNA sequences that define origins of replication have not been identified yet. ORC is required to assemble the pre-replication complex necessary to initiate DNA replication. The chain is Origin of replication complex subunit 6 from Oryza sativa subsp. indica (Rice).